The following is a 334-amino-acid chain: Malate dehydrogenase, mitochondrial (334 aa).

A mitochondrion-targeting transit peptide spans 1-17; it reads MLSRVAKRAFSSTVANP. Residues 24 to 30 and D50 each bind NAD(+); that span reads GAGGGIG. Substrate is bound by residues R99 and R105. NAD(+) contacts are provided by residues N112 and 135–137; that span reads ISN. Substrate-binding residues include N137 and R171. The residue at position 177 (S177) is a Phosphoserine. The Proton acceptor role is filled by H195. T199 is modified (phosphothreonine). M245 is an NAD(+) binding site.

This sequence belongs to the LDH/MDH superfamily. MDH type 1 family. In terms of assembly, homodimer.

It is found in the mitochondrion matrix. The enzyme catalyses (S)-malate + NAD(+) = oxaloacetate + NADH + H(+). The sequence is that of Malate dehydrogenase, mitochondrial (MDH1) from Saccharomyces cerevisiae (strain ATCC 204508 / S288c) (Baker's yeast).